The primary structure comprises 134 residues: Ion transport peptide-like (134 aa).

Cystine bridges form between Cys-62/Cys-98, Cys-78/Cys-94, and Cys-81/Cys-107.

This sequence belongs to the arthropod CHH/MIH/GIH/VIH hormone family.

The protein resides in the secreted. This Schistocerca gregaria (Desert locust) protein is Ion transport peptide-like.